The following is a 169-amino-acid chain: MNHIALFEPRIHFNTGNIARTCAATNTVLHLIEPFGFEISDKHLKRAGLDYWDKVNIVYHKNLQDFMNSIADGGQLYLVSKFAEHVYSDVDYSDDKKDHYFLFGREDTGLPEEFMHEHRDECIRIPMNDEHVRSLNLSNCACMIVYEALKQQEFRGLELVHTYEKDKLK.

4 residues coordinate S-adenosyl-L-methionine: V79, G104, I125, and S134.

This sequence belongs to the class IV-like SAM-binding methyltransferase superfamily. RNA methyltransferase TrmH family. TrmL subfamily.

It localises to the cytoplasm. It carries out the reaction cytidine(34) in tRNA + S-adenosyl-L-methionine = 2'-O-methylcytidine(34) in tRNA + S-adenosyl-L-homocysteine + H(+). The catalysed reaction is 5-carboxymethylaminomethyluridine(34) in tRNA(Leu) + S-adenosyl-L-methionine = 5-carboxymethylaminomethyl-2'-O-methyluridine(34) in tRNA(Leu) + S-adenosyl-L-homocysteine + H(+). Its function is as follows. Could methylate the ribose at the nucleotide 34 wobble position in tRNA. This chain is Putative tRNA (cytidine(34)-2'-O)-methyltransferase, found in Lactococcus lactis subsp. cremoris (strain MG1363).